Consider the following 1252-residue polypeptide: Myosin-1 (1252 aa).

The interval 1–27 (MAPSKKAGKKVTPASKKSAGQGKVAKA) is disordered. In terms of domain architecture, Myosin motor spans 38 to 712 (VGVSDMTLLT…TLFALETMRD (675 aa)). Position 128–135 (128–135 (GESGAGKT)) interacts with ATP. A Phosphoserine modification is found at Ser-356. Residues 403 to 485 (IIGILDIFGF…PGIFAALNDA (83 aa)) are actin-binding. IQ domains follow at residues 716–736 (HNMAARIQRAFRNYMRYKHEC) and 737–762 (ARRIQRFWKNNKEGIAYAQTRDYGHQ). The TH1 domain maps to 770–953 (RRRFSLLSYR…TVHVASGEPP (184 aa)). Disordered regions lie at residues 945–1049 (VHVA…PETP) and 1103–1228 (PPKA…PATA). 2 stretches are compositionally biased toward pro residues: residues 989–999 (RSVPKPKPVAQ) and 1028–1046 (RPPPAPPRNIAPPPPPAKP). The SH3 domain maps to 1046 to 1104 (PETPMYRAKFAFEGQEGEMSLKKDDVVELVEKDDNGWWLVKMDGVEGWAPNNYLELVPP). Positions 1162 to 1175 (ADTTPASSRPSSAI) are enriched in polar residues. Residues 1178-1193 (KPPPPVAAKPKPPVIP) are compositionally biased toward pro residues. Low complexity predominate over residues 1194–1203 (VKPSVSAKGP). The segment covering 1204-1215 (AKPPIPTAPRPP) has biased composition (pro residues). A compositionally biased stretch (low complexity) spans 1216–1228 (AASTSRSSKPATA).

It belongs to the TRAFAC class myosin-kinesin ATPase superfamily. Myosin family. In terms of processing, phosphorylation of the TEDS site (Ser-356) is required for the polarization of the actin cytoskeleton. Phosphorylation probably activates the myosin-I ATPase activity.

It localises to the cytoplasm. The protein localises to the cytoskeleton. It is found in the actin patch. Its function is as follows. Type-I myosin implicated in the organization of the actin cytoskeleton. Required for proper actin cytoskeleton polarization. At the cell cortex, assembles in patch-like structures together with proteins from the actin-polymerizing machinery and promotes actin assembly. Functions as actin nucleation-promoting factor (NPF) for the Arp2/3 complex. This chain is Myosin-1 (MYO1), found in Laccaria bicolor (strain S238N-H82 / ATCC MYA-4686) (Bicoloured deceiver).